A 102-amino-acid chain; its full sequence is Large ribosomal subunit protein uL24 (102 aa).

It belongs to the universal ribosomal protein uL24 family. In terms of assembly, part of the 50S ribosomal subunit.

One of two assembly initiator proteins, it binds directly to the 5'-end of the 23S rRNA, where it nucleates assembly of the 50S subunit. Functionally, one of the proteins that surrounds the polypeptide exit tunnel on the outside of the subunit. In Paraburkholderia phytofirmans (strain DSM 17436 / LMG 22146 / PsJN) (Burkholderia phytofirmans), this protein is Large ribosomal subunit protein uL24.